The primary structure comprises 121 residues: uncharacterized protein (121 aa).

The first 31 residues, 1-31 (MILNNKGFIRILEATIAGIMVILVFSYLVMS), serve as a signal peptide directing secretion.

This sequence to B.burgdorferi BB0465 N-terminal region.

This is an uncharacterized protein from Methanocaldococcus jannaschii (strain ATCC 43067 / DSM 2661 / JAL-1 / JCM 10045 / NBRC 100440) (Methanococcus jannaschii).